Here is a 397-residue protein sequence, read N- to C-terminus: Subtilisin-like protease 3 (397 aa).

An N-terminal signal peptide occupies residues 1–19; that stretch reads MGCIKVISVFLAAIAAVDA. The propeptide occupies 20–116; the sequence is RAFFHNRGGN…VEHDRVVKLA (97 aa). An Inhibitor I9 domain is found at 35–116; sequence SYIVVMKDGV…VEHDRVVKLA (82 aa). In terms of domain architecture, Peptidase S8 spans 126-397; the sequence is TWGLGRVSHK…NRLLYNGSGR (272 aa). Catalysis depends on charge relay system residues Asp-158 and His-189. The N-linked (GlcNAc...) asparagine glycan is linked to Asn-250. Residue Ser-344 is the Charge relay system of the active site. Asn-393 carries N-linked (GlcNAc...) asparagine glycosylation.

This sequence belongs to the peptidase S8 family.

It is found in the secreted. Secreted subtilisin-like serine protease with keratinolytic activity that contributes to pathogenicity. This is Subtilisin-like protease 3 (SUB3) from Arthroderma benhamiae (strain ATCC MYA-4681 / CBS 112371) (Trichophyton mentagrophytes).